Reading from the N-terminus, the 134-residue chain is Profilin-3 (134 aa).

An intrachain disulfide couples cysteine 13 to cysteine 118. The short motif at 84–100 (AVIRGKKGSGGITIKKT) is the Involved in PIP2 interaction element. Position 114 is a phosphothreonine (threonine 114).

Belongs to the profilin family. Occurs in many kinds of cells as a complex with monomeric actin in a 1:1 ratio. Phosphorylated by MAP kinases.

It localises to the cytoplasm. The protein localises to the cytoskeleton. Binds to actin and affects the structure of the cytoskeleton. At high concentrations, profilin prevents the polymerization of actin, whereas it enhances it at low concentrations. The polypeptide is Profilin-3 (Olea europaea (Common olive)).